The primary structure comprises 98 residues: Elicitin Vex1 (98 aa).

3 disulfides stabilise this stretch: cysteine 3–cysteine 71, cysteine 27–cysteine 56, and cysteine 51–cysteine 95. The N-linked (GlcNAc...) asparagine glycan is linked to asparagine 92.

This sequence belongs to the elicitin family.

Its subcellular location is the secreted. Induces local and distal defense responses (incompatible hypersensitive reaction) in plants from the solanaceae and cruciferae families. Elicits leaf necrosis and causes the accumulation of pathogenesis-related proteins. Might interact with the lipidic molecules of the plasma membrane. This chain is Elicitin Vex1, found in Phytopythium vexans (Damping-off fungus).